The chain runs to 382 residues: ATP phosphoribosyltransferase regulatory subunit (382 aa).

The protein belongs to the class-II aminoacyl-tRNA synthetase family. HisZ subfamily. Heteromultimer composed of HisG and HisZ subunits.

It localises to the cytoplasm. It participates in amino-acid biosynthesis; L-histidine biosynthesis; L-histidine from 5-phospho-alpha-D-ribose 1-diphosphate: step 1/9. In terms of biological role, required for the first step of histidine biosynthesis. May allow the feedback regulation of ATP phosphoribosyltransferase activity by histidine. The chain is ATP phosphoribosyltransferase regulatory subunit from Burkholderia ambifaria (strain MC40-6).